The chain runs to 2761 residues: Serine/threonine-protein kinase TEL1 (2761 aa).

The FAT domain occupies 1692–2294 (PVIPIMLSLG…LYPLISMSLQ (603 aa)). The region spanning 2404-2710 (DPKVLISSSG…DFSELLEEDN (307 aa)) is the PI3K/PI4K catalytic domain. The tract at residues 2410-2416 (SSSGLSL) is G-loop. Residues 2579-2587 (GLGDRHLNN) are catalytic loop. Positions 2599 to 2623 (HIDLGVAFDQGKLLPIPELVPFRLT) are activation loop. In terms of domain architecture, FATC spans 2729–2761 (DGLSVEAIVQELLSSATDKQNLATIYMGWSPFY).

It belongs to the PI3/PI4-kinase family. ATM subfamily. Associates with DNA double-strand breaks.

It localises to the nucleus. The protein resides in the chromosome. Its subcellular location is the telomere. The enzyme catalyses L-seryl-[protein] + ATP = O-phospho-L-seryl-[protein] + ADP + H(+). It catalyses the reaction L-threonyl-[protein] + ATP = O-phospho-L-threonyl-[protein] + ADP + H(+). Functionally, serine/threonine protein kinase which activates checkpoint signaling upon genotoxic stresses such as ionizing radiation (IR), ultraviolet light (UV), or DNA replication stalling, thereby acting as a DNA damage sensor. Recognizes the substrate consensus sequence [ST]-Q. Phosphorylates histone H2A to form H2AS128ph (gamma-H2A) at sites of DNA damage, involved in the regulation of DNA damage response mechanism. Required for the control of telomere length and genome stability. The protein is Serine/threonine-protein kinase TEL1 (TEL1) of Kluyveromyces lactis (strain ATCC 8585 / CBS 2359 / DSM 70799 / NBRC 1267 / NRRL Y-1140 / WM37) (Yeast).